The sequence spans 94 residues: Defensin alpha 5 (94 aa).

Residues 1–19 (MRTIAILAAILLVALQAQA) form the signal peptide. Cystine bridges form between Cys-65–Cys-93, Cys-67–Cys-82, and Cys-72–Cys-92.

This sequence belongs to the alpha-defensin family. As to quaternary structure, homodimer. Homotetramer. Interacts with B.antracis lef/lethal factor. Post-translationally, glycosylated. In terms of processing, proteolytically cleaved at Arg-62 by trypsin. Both the propeptide form proHD5/HD5(20-94) and HD5(56-94) are cleaved into the lumenal peptide form HD5(63-94) by trypsin. Unprocessed proHD5 exerts antimicrobial activities, but peptide potency is enhanced by peptide processing. Proteolytically cleaved in duodenal fluid; derived fragments are antimicrobially active against commensal bacteria (in vitro). (Microbial infection) The disulfide bridges and homodimerization are a prerequisite for the enhancement of S.flexneri adhesion and invasion. In terms of tissue distribution, expressed in the gastrointestinal, reproductive, and urinary tracts (at protein level). Expressed in Paneth cells of the small intestine (at protein level). Expressed throughout the urothelium of the lower urinary tract and in the collecting tubules of the kidney (at protein level). Expressed in stratified squamous epithelial cells of the female genital tract epithelia, such as in vagina, ectocervix, endocervix, endometrium, and fallopian tube (at protein level). Endometrial expression correlates with stages of the menstrual cycle: Expression is low during the early proliferative phase, increased during the mid- to late proliferative phase, peaks during the early secretory phase of the cycle, and decreases during the mid- to late secretory phase.

The protein resides in the secreted. The protein localises to the cytoplasmic vesicle. Its subcellular location is the secretory vesicle. Host-defense peptide that maintains sterility in the urogenital system. Has antimicrobial activity against a wide range of bacteria, including Gram-negative E.coli, P.aeruginosa and S.typhimurium, and Gram-positive E.aerogenes, S.aureus, B.cereus, E.faecium and L.monocytogenes. Confers resistance to intestinal infection by S.typhimurium. Exhibits antimicrobial activity against enteric commensal bacteria such as B.adolescentis, L.acidophilus, B.breve, L.fermentum, B.longum and S.thermophilus. Binds to bacterial membranes and causes membrane disintegration. Induces the secretion of the chemokine IL-8 by intestinal epithelial cells. Binds to B.antracis lef/lethal factor, a major virulence factor from B.anthracis, and neutralizes its enzymatic activity. Its function is as follows. (Microbial infection) Acts as a target for S.flexneri infection by binding to the bacterium, possibly via bacterial surface proteins, and thereby augmenting infectivity via enhanced bacterial adhesion and invasion of epithelial cells and tissues. This Homo sapiens (Human) protein is Defensin alpha 5 (DEFA5).